The chain runs to 444 residues: ATP-dependent 6-phosphofructokinase 2 (444 aa).

S55 carries the phosphoserine modification. ATP-binding positions include G86, 149 to 150 (RG), and 174 to 177 (GDGT). Position 175 (D175) interacts with Mg(2+). Substrate-binding positions include 203–205 (TVD), 248–250 (MGR), E304, and 362–365 (YMIR). D205 (proton acceptor) is an active-site residue.

The protein belongs to the phosphofructokinase type A (PFKA) family. PPi-dependent PFK group II subfamily. Atypical ATP-dependent clade 'X' sub-subfamily. Homotetramer. It depends on Mg(2+) as a cofactor. In terms of tissue distribution, mostly expressed in roots and stems.

Its subcellular location is the cytoplasm. The enzyme catalyses beta-D-fructose 6-phosphate + ATP = beta-D-fructose 1,6-bisphosphate + ADP + H(+). It participates in carbohydrate degradation; glycolysis; D-glyceraldehyde 3-phosphate and glycerone phosphate from D-glucose: step 3/4. Its activity is regulated as follows. Allosterically activated by AMP. Catalyzes the phosphorylation of D-fructose 6-phosphate to fructose 1,6-bisphosphate by ATP, the first committing step of glycolysis. In Arabidopsis thaliana (Mouse-ear cress), this protein is ATP-dependent 6-phosphofructokinase 2.